Here is a 72-residue protein sequence, read N- to C-terminus: UPF0270 protein KPN78578_37030 (72 aa).

It belongs to the UPF0270 family.

This is UPF0270 protein KPN78578_37030 from Klebsiella pneumoniae subsp. pneumoniae (strain ATCC 700721 / MGH 78578).